A 206-amino-acid polypeptide reads, in one-letter code: Interleukin-24 (206 aa).

An N-terminal signal peptide occupies residues 1–51 (MNFQQRLQSLWTLARPFCPPLLATASQMQMVVLPCLGFTLLLWSQVSGAQG). A disulfide bond links cysteine 59 and cysteine 106. N-linked (GlcNAc...) asparagine glycosylation is found at asparagine 85 and asparagine 99. Lysine 122 is covalently cross-linked (Glycyl lysine isopeptide (Lys-Gly) (interchain with G-Cter in ubiquitin)). N-linked (GlcNAc...) asparagine glycosylation is present at asparagine 126.

It belongs to the IL-10 family. In terms of processing, glycosylated. Ubiquitination at Lys-122 promotes proteasomal degradation. As to expression, up-regulated in melanoma cells induced to terminally differentiate.

It localises to the secreted. Multifunctional cytokine mainly produced by T-cells that plays a regulatory role in immune response, tissue homeostasis, host defense, and oncogenesis. Possesses antiviral functions and induces the type I interferon response during influenza infection. Signals through two receptor complexes IL20RA/IL20RB or IL20RB/IL22RA1. In turn, stimulates the JAK1-STAT3 and MAPK pathways and promotes the secretion of pro-inflammatory mediators including IL8 and MMP1. Intracellularly, maintains endoplasmic reticulum homeostasis by restricting the eIF2alpha-CHOP pathway-mediated stress signal. In addition, acts as a quality control mechanism for the ubiquitin proteasome system by alerting the cell to proteasome dysfunction through activation of PKR/EIF2AK2. The chain is Interleukin-24 (IL24) from Homo sapiens (Human).